We begin with the raw amino-acid sequence, 291 residues long: Small ribosomal subunit protein uS2 (291 aa).

The interval 241 to 270 is disordered; the sequence is KREPRQINRPVMSSENQAEQQTSVANENVQ. The segment covering 251–270 has biased composition (polar residues); that stretch reads VMSSENQAEQQTSVANENVQ.

The protein belongs to the universal ribosomal protein uS2 family.

The sequence is that of Small ribosomal subunit protein uS2 from Mycoplasma capricolum subsp. capricolum (strain California kid / ATCC 27343 / NCTC 10154).